The chain runs to 314 residues: Elongation factor Ts (314 aa).

Residues 82-85 (TDFV) are involved in Mg(2+) ion dislocation from EF-Tu.

Belongs to the EF-Ts family.

It localises to the cytoplasm. In terms of biological role, associates with the EF-Tu.GDP complex and induces the exchange of GDP to GTP. It remains bound to the aminoacyl-tRNA.EF-Tu.GTP complex up to the GTP hydrolysis stage on the ribosome. The chain is Elongation factor Ts from Nostoc punctiforme (strain ATCC 29133 / PCC 73102).